Reading from the N-terminus, the 120-residue chain is Protein crumbs homolog 3 (120 aa).

A signal peptide spans 1–26 (MANPGLGLLLALGLPFLLARWGRAWG). The Extracellular portion of the chain corresponds to 27-59 (QIQTTSANENSTVLPSSTSSSSDGNLRPEAITA). The N-linked (GlcNAc...) asparagine glycan is linked to Asn36. The helical transmembrane segment at 60-80 (IIVVFSLLAALLLAVGLALLV) threads the bilayer. At 81 to 120 (RKLREKRQTEGTYRPSSEEQVGARVPPTPNLKLPPEERLI) the chain is on the cytoplasmic side. The tract at residues 84-120 (REKRQTEGTYRPSSEEQVGARVPPTPNLKLPPEERLI) is interaction with EPB41L5. The segment at 87 to 120 (RQTEGTYRPSSEEQVGARVPPTPNLKLPPEERLI) is disordered. Positions 90-99 (EGTYRPSSEE) are enriched in polar residues. A PDZ-binding motif is present at residues 117–120 (ERLI).

As to quaternary structure, component of a complex composed of CRB3, PALS1 and PATJ. Interacts (via C-terminus) with PALS1 (via PDZ domain). Interacts with PARD6A. Interacts (via intracellular domain) with EPB41L5. Interacts with WDR83. As to expression, preferentially expressed in epithelial tissues. Expressed at high levels in lung, kidney, and colon. Expressed at high levels in retina, colon and mammary glands. Moderately expressed in liver, spleen, pancreas and prostate. Moderately to weakly expressed in the placenta. Weakly expressed in skeletal muscle and small intestine.

It localises to the apical cell membrane. Its subcellular location is the cell junction. The protein resides in the tight junction. Involved in the establishment of cell polarity in mammalian epithelial cells. Regulates the morphogenesis of tight junctions. Involved in promoting phosphorylation and cytoplasmic retention of transcriptional coactivators YAP1 and WWTR1/TAZ which leads to suppression of TGFB1-dependent transcription of target genes such as CCN2/CTGF, SERPINE1/PAI1, SNAI1/SNAIL1 and SMAD7. The sequence is that of Protein crumbs homolog 3 from Homo sapiens (Human).